Reading from the N-terminus, the 287-residue chain is Formamidopyrimidine-DNA glycosylase (287 aa).

Pro2 serves as the catalytic Schiff-base intermediate with DNA. Glu3 acts as the Proton donor in catalysis. The Proton donor; for beta-elimination activity role is filled by Lys58. DNA contacts are provided by His104, Arg123, and Arg166. The FPG-type zinc finger occupies 251–287 (RTYDREGQPCRNDGCRGVIGREVQAGRSTFYCPVCQR). Catalysis depends on Arg277, which acts as the Proton donor; for delta-elimination activity.

Belongs to the FPG family. Monomer. Requires Zn(2+) as cofactor.

The catalysed reaction is Hydrolysis of DNA containing ring-opened 7-methylguanine residues, releasing 2,6-diamino-4-hydroxy-5-(N-methyl)formamidopyrimidine.. It catalyses the reaction 2'-deoxyribonucleotide-(2'-deoxyribose 5'-phosphate)-2'-deoxyribonucleotide-DNA = a 3'-end 2'-deoxyribonucleotide-(2,3-dehydro-2,3-deoxyribose 5'-phosphate)-DNA + a 5'-end 5'-phospho-2'-deoxyribonucleoside-DNA + H(+). Functionally, involved in base excision repair of DNA damaged by oxidation or by mutagenic agents. Acts as a DNA glycosylase that recognizes and removes damaged bases. Has a preference for oxidized purines, such as 7,8-dihydro-8-oxoguanine (8-oxoG). Has AP (apurinic/apyrimidinic) lyase activity and introduces nicks in the DNA strand. Cleaves the DNA backbone by beta-delta elimination to generate a single-strand break at the site of the removed base with both 3'- and 5'-phosphates. The sequence is that of Formamidopyrimidine-DNA glycosylase from Phenylobacterium zucineum (strain HLK1).